We begin with the raw amino-acid sequence, 121 residues long: Large ribosomal subunit protein bL20 (121 aa).

The protein belongs to the bacterial ribosomal protein bL20 family.

Functionally, binds directly to 23S ribosomal RNA and is necessary for the in vitro assembly process of the 50S ribosomal subunit. It is not involved in the protein synthesizing functions of that subunit. This Ruegeria pomeroyi (strain ATCC 700808 / DSM 15171 / DSS-3) (Silicibacter pomeroyi) protein is Large ribosomal subunit protein bL20.